Here is an 80-residue protein sequence, read N- to C-terminus: MNKALFLCLVVLCAAVVFAAEDLQKAKHAPFKRGAAGAAICICPDKVGRGDLWLFRGDCPGGYGYTSDCYVWPNICCYPH.

An N-terminal signal peptide occupies residues 1–19; that stretch reads MNKALFLCLVVLCAAVVFA. Positions 20–31 are excised as a propeptide; the sequence is AEDLQKAKHAPF. 3 cysteine pairs are disulfide-bonded: cysteine 41/cysteine 76, cysteine 43/cysteine 69, and cysteine 59/cysteine 77.

This sequence belongs to the sea anemone type 3 (BDS) potassium channel toxin family. As to expression, moderately expressed in the ectodermal tissue from the distal and proximal tentacles, body wall, and oral disk.

It is found in the secreted. The protein resides in the nematocyst. Its function is as follows. Blocks Kv3 voltage-gated potassium channels. Reduces blood pressure. In Anemonia viridis (Snakelocks anemone), this protein is Kappa-actitoxin-Avd4f.